We begin with the raw amino-acid sequence, 441 residues long: Insulinoma-associated protein 1 (441 aa).

Positions 1-12 are enriched in basic residues; sequence MPKGFLVKRSRK. The tract at residues 1-20 is SNAG domain; that stretch reads MPKGFLVKRSRKSPPVSYRV. Disordered regions lie at residues 1–31, 43–189, 205–224, and 278–316; these read MPKGFLVKRSRKSPPVSYRVREEEEPRGESL, TGGA…KAIR, LKIKEGPVEPPRPRAASSGP, and RWHKPRPPVASTAQAKEEPLSDRDTPSPGASESGSEDGL. A compositionally biased stretch (basic and acidic residues) spans 19 to 28; sequence RVREEEEPRG. Positions 74 to 83 are enriched in polar residues; it reads NPDTVQQALY. Residues 89–98 show a composition bias toward basic and acidic residues; that stretch reads VSREQRERKY. 2 stretches are compositionally biased toward low complexity: residues 138-147 and 169-180; these read VSSSSSVSRS and GATSSSAPSKPP. Residues 258–280 form a C2H2-type 1 zinc finger; the sequence is YRCPECHKVFSCPANLASHRRWH. Positions 292–302 are enriched in basic and acidic residues; it reads AKEEPLSDRDT. C2H2-type zinc fingers lie at residues 317–339, 372–395, and 400–423; these read YECPRCARKFRRQAYLRKHLLSH, HPCPVCGETFPGKSSQERHIRLLH, and YPCKYCPATFYSSPGLTRHINKCH.

The protein belongs to the INSM1 family.

The protein resides in the nucleus. May act as a transcriptional regulator. Plays a role in noradrenergic neuron, pancreatic and gastrointestinal endocrine cells differentiation during embryonic development. The protein is Insulinoma-associated protein 1 (insm1) of Xenopus tropicalis (Western clawed frog).